The chain runs to 312 residues: Olfactory receptor 7G3 (312 aa).

The Extracellular segment spans residues 1–25 (MKAGNFSDTPEFFLLGLSGDPELQP). The N-linked (GlcNAc...) asparagine glycan is linked to Asn-5. A helical membrane pass occupies residues 26 to 46 (ILFMLFLSMYLATMLGNLLII). Residues 47–54 (LAVNSDSH) are Cytoplasmic-facing. A helical membrane pass occupies residues 55 to 75 (LHTPMYFLLSILSLVDICFTS). Residues 76-99 (TTMPKMLVNIQAQAQSINYTGCLT) are Extracellular-facing. N-linked (GlcNAc...) asparagine glycosylation occurs at Asn-93. Cys-97 and Cys-189 are oxidised to a cystine. Residues 100 to 120 (QICFVLVFVGLENGILVMMAY) form a helical membrane-spanning segment. Topologically, residues 121-139 (DRFVAICHPLRYNVIMNPK) are cytoplasmic. Residues 140 to 160 (LCGLLLLLSFIVSVLDALLHT) traverse the membrane as a helical segment. Residues 161–197 (LMVLQLTFCIDLEIPHFFCELAHILKLACSDVLINNI) are Extracellular-facing. Residues 198-217 (LVYLVTSLLGVVPLSGIIFS) form a helical membrane-spanning segment. At 218–237 (YTRIVSSVMKIPSAGGKYKA) the chain is on the cytoplasmic side. The helical transmembrane segment at 238 to 258 (FSICGSHLIVVSLFYGTGFGV) threads the bilayer. Residues 259 to 271 (YLSSGATHSSRKG) are Extracellular-facing. A helical transmembrane segment spans residues 272 to 292 (AIASVMYTVVTPMLNPLIYSL). At 293-312 (RNKDMLKALRKLISRIPSFH) the chain is on the cytoplasmic side.

The protein belongs to the G-protein coupled receptor 1 family.

It localises to the cell membrane. In terms of biological role, odorant receptor. This chain is Olfactory receptor 7G3 (OR7G3), found in Homo sapiens (Human).